A 216-amino-acid polypeptide reads, in one-letter code: Large ribosomal subunit protein uL24m (216 aa).

The transit peptide at 1 to 9 (MRLTLLLEM) directs the protein to the mitochondrion. The region spanning 56–89 (YFRGDTVEVLHGKDAGKQGKVTQVVRARNWVVVD) is the KOW domain.

It belongs to the universal ribosomal protein uL24 family. As to quaternary structure, component of the mitochondrial ribosome large subunit (39S) which comprises a 16S rRNA and about 50 distinct proteins. As to expression, ubiquitous. Expressed at greater levels in the kidney, adipose tissue, muscle and liver than the brain, heart, ovary and lung.

It is found in the mitochondrion. This Xenopus laevis (African clawed frog) protein is Large ribosomal subunit protein uL24m (mrpl24).